The following is a 267-amino-acid chain: Apolipoprotein A-I (267 aa).

The first 18 residues, Met1–Ala18, serve as a signal peptide directing secretion. Tandem repeats lie at residues Leu68–Gly89 and Pro90–Ser111. A 10 X approximate tandem repeats region spans residues Leu68 to Gln267. Met110 carries the methionine sulfoxide modification. A 3; half-length repeat occupies Lys112–Gln122. Tandem repeats lie at residues Pro123–Glu144, Pro145–Ser166, Pro167–Ala188, Pro189–Gly210, and Ala211–Lys232. Met136 carries the post-translational modification Methionine sulfoxide. A 9; half-length repeat occupies Pro233–Leu243. Repeat 10 spans residues Pro244–Gln267.

Belongs to the apolipoprotein A1/A4/E family. As to quaternary structure, homodimer. Interacts with APOA1BP and CLU. Component of a sperm activating protein complex (SPAP), consisting of APOA1, an immunoglobulin heavy chain, an immunoglobulin light chain and albumin. Interacts with NDRG1. Interacts with SCGB3A2. Interacts with NAXE and YJEFN3. In terms of processing, glycosylated. Palmitoylated. Post-translationally, phosphorylation sites are present in the extracellular medium. Major protein of plasma HDL, also found in chylomicrons.

The protein localises to the secreted. Participates in the reverse transport of cholesterol from tissues to the liver for excretion by promoting cholesterol efflux from tissues and by acting as a cofactor for the lecithin cholesterol acyltransferase (LCAT). As part of the SPAP complex, activates spermatozoa motility. This is Apolipoprotein A-I (APOA1) from Pan troglodytes (Chimpanzee).